Consider the following 359-residue polypeptide: Molybdenum import ATP-binding protein ModC (359 aa).

The region spanning 1-233 (MSGLTVSIRG…IDAESEGGGV (233 aa)) is the ABC transporter domain. 32–39 (GHSGAGKT) contacts ATP. The 67-residue stretch at 289-355 (AISIRNLLPV…VKAVSVDRAA (67 aa)) folds into the Mop domain.

This sequence belongs to the ABC transporter superfamily. Molybdate importer (TC 3.A.1.8) family. As to quaternary structure, the complex is composed of two ATP-binding proteins (ModC), two transmembrane proteins (ModB) and a solute-binding protein (ModA).

Its subcellular location is the cell inner membrane. It carries out the reaction molybdate(out) + ATP + H2O = molybdate(in) + ADP + phosphate + H(+). In terms of biological role, part of the ABC transporter complex ModABC involved in molybdenum import. Responsible for energy coupling to the transport system. The sequence is that of Molybdenum import ATP-binding protein ModC from Brucella abortus (strain 2308).